The chain runs to 284 residues: Isopentenyl-diphosphate delta-isomerase (284 aa).

Residue K77 participates in substrate binding. Mg(2+)-binding residues include H81 and H92. Positions 90-256 constitute a Nudix hydrolase domain; that stretch reads LLHRAFSVFL…SLVFTPWFKL (167 aa). The substrate site is built by R111 and K115. Residue C127 is part of the active site. Position 128 (S128) interacts with substrate. Positions 128-172 match the Nudix box motif; sequence SHPLCVPSELGVDSSLEGSKDVNNLTNAVKGAKVAAQRKLEHELG. Residues E204 and E206 each contribute to the Mg(2+) site. The active site involves E206.

It belongs to the IPP isomerase type 1 family. It depends on Mg(2+) as a cofactor.

It is found in the cytoplasm. The enzyme catalyses isopentenyl diphosphate = dimethylallyl diphosphate. It functions in the pathway isoprenoid biosynthesis; dimethylallyl diphosphate biosynthesis; dimethylallyl diphosphate from isopentenyl diphosphate: step 1/1. Functionally, isopentenyl-diphosphate delta-isomerase; part of the second module of ergosterol biosynthesis pathway that includes the middle steps of the pathway. IDI1 catalyzes the 1,3-allylic rearrangement of isopentenyl (IPP) to its highly electrophilic allylic isomer, dimethylallyl diphosphate (DMAPP). The second module is carried out in the vacuole and involves the formation of farnesyl diphosphate, which is also an important intermediate in the biosynthesis of ubiquinone, dolichol, heme and prenylated proteins. Activity by the mevalonate kinase ERG12 first converts mevalonate into 5-phosphomevalonate. 5-phosphomevalonate is then further converted to 5-diphosphomevalonate by the phosphomevalonate kinase ERG8. The diphosphomevalonate decarboxylase MVD then produces isopentenyl diphosphate. The isopentenyl-diphosphate delta-isomerase IDI1 then catalyzes the 1,3-allylic rearrangement of the homoallylic substrate isopentenyl (IPP) to its highly electrophilic allylic isomer, dimethylallyl diphosphate (DMAPP). Finally the farnesyl diphosphate synthase ERG20 catalyzes the sequential condensation of isopentenyl pyrophosphate with dimethylallyl pyrophosphate, and then with the resultant geranylpyrophosphate to the ultimate product farnesyl pyrophosphate. In Candida albicans (strain SC5314 / ATCC MYA-2876) (Yeast), this protein is Isopentenyl-diphosphate delta-isomerase.